The following is a 346-amino-acid chain: Uroporphyrinogen decarboxylase (346 aa).

Substrate contacts are provided by residues R23–R27, D72, Y155, S209, and H322.

It belongs to the uroporphyrinogen decarboxylase family. In terms of assembly, homodimer.

It localises to the cytoplasm. The catalysed reaction is uroporphyrinogen III + 4 H(+) = coproporphyrinogen III + 4 CO2. The protein operates within porphyrin-containing compound metabolism; protoporphyrin-IX biosynthesis; coproporphyrinogen-III from 5-aminolevulinate: step 4/4. Its function is as follows. Catalyzes the decarboxylation of four acetate groups of uroporphyrinogen-III to yield coproporphyrinogen-III. The polypeptide is Uroporphyrinogen decarboxylase (Anaeromyxobacter sp. (strain Fw109-5)).